The chain runs to 320 residues: Cyclin-H (320 aa).

A Phosphoserine; by CDK8 modification is found at Ser5. Ser132 carries the phosphoserine modification. Ser304 is subject to Phosphoserine; by CDK8.

It belongs to the cyclin family. Cyclin C subfamily. As to quaternary structure, associates primarily with CDK7 and MAT1 to form the CAK complex. CAK can further associate with the core-TFIIH to form the TFIIH basal transcription factor.

The protein localises to the nucleus. Regulates CDK7, the catalytic subunit of the CDK-activating kinase (CAK) enzymatic complex. CAK activates the cyclin-associated kinases CDK1, CDK2, CDK4 and CDK6 by threonine phosphorylation. CAK complexed to the core-TFIIH basal transcription factor activates RNA polymerase II by serine phosphorylation of the repetitive C-terminal domain (CTD) of its large subunit (POLR2A), allowing its escape from the promoter and elongation of the transcripts. Involved in cell cycle control and in RNA transcription by RNA polymerase II. Its expression and activity are constant throughout the cell cycle. In Bos taurus (Bovine), this protein is Cyclin-H (CCNH).